Consider the following 297-residue polypeptide: Urease accessory protein UreD (297 aa).

This sequence belongs to the UreD family. As to quaternary structure, ureD, UreF and UreG form a complex that acts as a GTP-hydrolysis-dependent molecular chaperone, activating the urease apoprotein by helping to assemble the nickel containing metallocenter of UreC. The UreE protein probably delivers the nickel.

The protein localises to the cytoplasm. In terms of biological role, required for maturation of urease via the functional incorporation of the urease nickel metallocenter. This chain is Urease accessory protein UreD, found in Prochlorococcus marinus subsp. pastoris (strain CCMP1986 / NIES-2087 / MED4).